The sequence spans 518 residues: Golgi-associated olfactory signaling regulator (518 aa).

Residues 1–19 form the signal peptide; it reads MKSFSRILFLVFLLAGLRS. Over 20–409 the chain is Extracellular; that stretch reads KAAPSAPLPL…GRPRGAAGGA (390 aa). The tract at residues 38–377 is disordered; the sequence is HPSETSPLKG…ATLRAPQRHS (340 aa). Residues 92–106 show a composition bias toward basic and acidic residues; that stretch reads DLRETPHPESPETPK. Residue Asn124 is glycosylated (N-linked (GlcNAc...) asparagine). A compositionally biased stretch (pro residues) spans 138–153; that stretch reads TPGPTEMPHPGSPETP. An N-linked (GlcNAc...) asparagine glycan is attached at Asn156. Polar residues-rich tracts occupy residues 168-180 and 187-207; these read TPNT…TPQE and LNAT…NPTK. Residues Asn188 and Asn220 are each glycosylated (N-linked (GlcNAc...) asparagine). Basic and acidic residues-rich tracts occupy residues 209-220 and 236-247; these read PDPKSPEKHDLN and DPSKTPHPESHV. 2 stretches are compositionally biased toward polar residues: residues 248–270 and 276–285; these read THNP…QNAT and SDPQISTSLY. Asn268 carries N-linked (GlcNAc...) asparagine glycosylation. Residues 410–430 traverse the membrane as a helical segment; it reads LCLFFAGTALLIGIFVLLWCL. At 431–518 the chain is on the cytoplasmic side; sequence YRRAARQRPF…SPATLPNNFV (88 aa). Residues 477–518 are disordered; sequence HIATKQPPPTPPLPPKLPPPPRGGRPQRLEALSPATLPNNFV. A compositionally biased stretch (pro residues) spans 482 to 499; that stretch reads QPPPTPPLPPKLPPPPRG.

It is found in the golgi apparatus membrane. Its function is as follows. Required for proper function of the olfactory system. May be involved in establishing the acuity of olfactory sensory signaling. The polypeptide is Golgi-associated olfactory signaling regulator (GFY) (Homo sapiens (Human)).